The primary structure comprises 291 residues: 33 kDa chaperonin (291 aa).

2 disulfide bridges follow: cysteine 235–cysteine 237 and cysteine 268–cysteine 271.

This sequence belongs to the HSP33 family. Post-translationally, under oxidizing conditions two disulfide bonds are formed involving the reactive cysteines. Under reducing conditions zinc is bound to the reactive cysteines and the protein is inactive.

It is found in the cytoplasm. Functionally, redox regulated molecular chaperone. Protects both thermally unfolding and oxidatively damaged proteins from irreversible aggregation. Plays an important role in the bacterial defense system toward oxidative stress. The polypeptide is 33 kDa chaperonin (Bacillus velezensis (strain DSM 23117 / BGSC 10A6 / LMG 26770 / FZB42) (Bacillus amyloliquefaciens subsp. plantarum)).